The primary structure comprises 193 residues: NADH-quinone oxidoreductase subunit B (193 aa).

[4Fe-4S] cluster is bound by residues C72, C73, C137, and C167.

This sequence belongs to the complex I 20 kDa subunit family. In terms of assembly, NDH-1 is composed of 14 different subunits. Subunits NuoB, C, D, E, F, and G constitute the peripheral sector of the complex. [4Fe-4S] cluster serves as cofactor.

The protein resides in the cell inner membrane. It catalyses the reaction a quinone + NADH + 5 H(+)(in) = a quinol + NAD(+) + 4 H(+)(out). In terms of biological role, NDH-1 shuttles electrons from NADH, via FMN and iron-sulfur (Fe-S) centers, to quinones in the respiratory chain. The immediate electron acceptor for the enzyme in this species is believed to be ubiquinone. Couples the redox reaction to proton translocation (for every two electrons transferred, four hydrogen ions are translocated across the cytoplasmic membrane), and thus conserves the redox energy in a proton gradient. The polypeptide is NADH-quinone oxidoreductase subunit B (Phenylobacterium zucineum (strain HLK1)).